The following is a 223-amino-acid chain: Cytidylate kinase (223 aa).

Residue 12–20 participates in ATP binding; that stretch reads GPSGVGKGT.

It belongs to the cytidylate kinase family. Type 1 subfamily.

It localises to the cytoplasm. The catalysed reaction is CMP + ATP = CDP + ADP. The enzyme catalyses dCMP + ATP = dCDP + ADP. The polypeptide is Cytidylate kinase (Xylella fastidiosa (strain 9a5c)).